We begin with the raw amino-acid sequence, 240 residues long: Ribosomal RNA small subunit methyltransferase J (240 aa).

Residues 93–94 (RD) and Asp162 contribute to the S-adenosyl-L-methionine site.

Belongs to the methyltransferase superfamily. RsmJ family.

It is found in the cytoplasm. It carries out the reaction guanosine(1516) in 16S rRNA + S-adenosyl-L-methionine = N(2)-methylguanosine(1516) in 16S rRNA + S-adenosyl-L-homocysteine + H(+). Specifically methylates the guanosine in position 1516 of 16S rRNA. In Francisella philomiragia subsp. philomiragia (strain ATCC 25017 / CCUG 19701 / FSC 153 / O#319-036), this protein is Ribosomal RNA small subunit methyltransferase J.